Here is a 3788-residue protein sequence, read N- to C-terminus: Lysosomal-trafficking regulator (3788 aa).

Disordered regions lie at residues 148–180 (KSTHRYSVRDARKTQLSTSDSEGNSDEKSTVVS) and 198–217 (EGHLVAKPDPSATKEQVLSD). At serine 164 the chain carries Phosphoserine. Threonine 165 carries the phosphothreonine modification. A Phosphoserine modification is found at serine 166. A WD 1 repeat occupies 662 to 700 (GPTSGLPSPSYRFQGILPSSGSEDLLWKWDALEAYQSFV). Disordered regions lie at residues 1169-1196 (LGPGDAVTEKSHPSEEELLSQPGDFSEE), 1213-1240 (GYEADSESNPEDVDTQDDGVELNPEAEG), and 1482-1519 (ESAAERGKRVKKRNKPSVLEDSSFEGAEGDRPEVTESI). The segment covering 1213–1232 (GYEADSESNPEDVDTQDDGV) has biased composition (acidic residues). Phosphoserine occurs at positions 1503 and 1504. One copy of the WD 2 repeat lies at 1576-1620 (SQENIFFPSKWQHLVLTYIQHPQGKKNVHGEISIWVSGQRKTDVI). Phosphoserine occurs at positions 2099, 2118, 2203, 2207, and 2254. The segment at 2177–2221 (ANGVSRGSPRFPRARVDHKDVGTEPRSDDDSPGDESYPRRPDNLK) is disordered. Positions 2190-2205 (ARVDHKDVGTEPRSDD) are enriched in basic and acidic residues. 2 disordered regions span residues 2556–2581 (HDSESPVHSPSAHRHSVPPKRRSIAG) and 2659–2681 (NTSQSKTSVSQTEISEEDMHHEQ). Over residues 2566–2578 (SAHRHSVPPKRRS) the composition is skewed to basic residues. Positions 2659–2671 (NTSQSKTSVSQTE) are enriched in polar residues. Residues 2996–3102 (AASESIRVNR…VRDDVYQSIL (107 aa)) enclose the BEACH-type PH domain. Positions 3126 to 3409 (QITNFEYLTH…QLFHTAHASR (284 aa)) constitute a BEACH domain. WD repeat units lie at residues 3550–3589 (SQQHQVTSCAWVPDSCQLFTGSKCGVITAYTNRLTSSTPS), 3601–3640 (GHTEEITGLCVCKPYSVMISVSRDGTCIVWDLNRLCYVQS), 3643–3686 (GHKS…VGHV), 3687–3731 (HCRE…PVRE), and 3736–3775 (KSNKPIISLTFSCDGHHLYTANSEGTVIAWCRKDQQRVKL).

As to quaternary structure, interacts with CPAP, LIP8 and ZNF521. Expressed in the heart, lung, liver, spleen, brain and in different immune cell types (purified B and T lymphocytes, bone marrow-derived macrophages and dendritic cells).

The protein resides in the cytoplasm. In terms of biological role, adapter protein that regulates and/or fission of intracellular vesicles such as lysosomes. Might regulate trafficking of effectors involved in exocytosis. In cytotoxic T-cells and natural killer (NK) cells, has role in the regulation of size, number and exocytosis of lytic granules. In macrophages and dendritic cells, regulates phagosome maturation by controlling the conversion of early phagosomal compartments into late phagosomes. In macrophages and dendritic cells, specifically involved in TLR3- and TLR4-induced production of pro-inflammatory cytokines by regulating the endosomal TLR3- TICAM1/TRIF and TLR4- TICAM1/TRIF signaling pathways. The protein is Lysosomal-trafficking regulator (Lyst) of Mus musculus (Mouse).